Here is a 125-residue protein sequence, read N- to C-terminus: Succinate dehydrogenase assembly factor 3, mitochondrial (125 aa).

The N-terminal 30 residues, 1 to 30 (MPGKHVSRVRALYRRILLLHRALPPDLKAL), are a transit peptide targeting the mitochondrion.

Belongs to the complex I LYR family. SDHAF3 subfamily. Interacts with Sdhb within an Sdha-Sdhb subcomplex.

The protein resides in the mitochondrion matrix. In terms of biological role, plays an essential role in the assembly of succinate dehydrogenase (SDH), an enzyme complex (also referred to as respiratory complex II) that is a component of both the tricarboxylic acid (TCA) cycle and the mitochondrial electron transport chain, and which couples the oxidation of succinate to fumarate with the reduction of ubiquinone (coenzyme Q) to ubiquinol. Promotes maturation of the iron-sulfur protein subunit Sdhb of the SDH catalytic dimer, protecting it from the deleterious effects of oxidants. May act together with SDHAF1. This Mus musculus (Mouse) protein is Succinate dehydrogenase assembly factor 3, mitochondrial.